The primary structure comprises 563 residues: Arginine--tRNA ligase (563 aa).

A 'HIGH' region motif is present at residues 121–131 (PNIAKPFSIGH).

This sequence belongs to the class-I aminoacyl-tRNA synthetase family. Monomer.

It is found in the cytoplasm. The enzyme catalyses tRNA(Arg) + L-arginine + ATP = L-arginyl-tRNA(Arg) + AMP + diphosphate. This is Arginine--tRNA ligase from Streptococcus mutans serotype c (strain ATCC 700610 / UA159).